A 347-amino-acid polypeptide reads, in one-letter code: D-alanine--D-alanine ligase (347 aa).

The ATP-grasp domain occupies 131 to 333 (KRVLESAGIA…YPELIERLVD (203 aa)). Residue 161 to 216 (EEKLAYPVFAKPSNMGSSVGISKSENQEELRQALKLAFRYDSRVLVEQGVNAREIE) participates in ATP binding. The Mg(2+) site is built by Asp-287, Glu-300, and Asn-302.

This sequence belongs to the D-alanine--D-alanine ligase family. Mg(2+) serves as cofactor. It depends on Mn(2+) as a cofactor.

The protein localises to the cytoplasm. The catalysed reaction is 2 D-alanine + ATP = D-alanyl-D-alanine + ADP + phosphate + H(+). It participates in cell wall biogenesis; peptidoglycan biosynthesis. Its function is as follows. Cell wall formation. In Streptococcus pneumoniae (strain P1031), this protein is D-alanine--D-alanine ligase.